Consider the following 509-residue polypeptide: Lysine--tRNA ligase (509 aa).

Mg(2+)-binding residues include E418 and E425.

This sequence belongs to the class-II aminoacyl-tRNA synthetase family. As to quaternary structure, homodimer. Mg(2+) is required as a cofactor.

The protein localises to the cytoplasm. The catalysed reaction is tRNA(Lys) + L-lysine + ATP = L-lysyl-tRNA(Lys) + AMP + diphosphate. The chain is Lysine--tRNA ligase (lysS) from Acinetobacter baylyi (strain ATCC 33305 / BD413 / ADP1).